Here is a 116-residue protein sequence, read N- to C-terminus: MERRKATVHVGNLAPSVTESLLYNAFIPFGEIISVALHRKEKAVDRSYAFVEFDEPEDAKEAMENMNYSILCDRCIRVSPANFALSAEETAVPDIAMLHPESADFQTFKSTSTPTS.

Positions 6–83 (ATVHVGNLAP…RCIRVSPANF (78 aa)) constitute an RRM domain.

It is found in the cytoplasm. It localises to the nucleus. This is an uncharacterized protein from Schizosaccharomyces pombe (strain 972 / ATCC 24843) (Fission yeast).